The following is a 156-amino-acid chain: Keratin-associated protein 13-4 (156 aa).

Repeat copies occupy residues 37 to 46, 47 to 56, 57 to 66, and 73 to 82. Residues 37–82 are 4 X 10 AA approximate repeats; the sequence is CQLGSSLYRNCQKTCWEPTSCRKSCYRRRTSMLCSPCQTTCSRSLG.

The protein belongs to the PMG family. Interacts with hair keratins.

In terms of biological role, in the hair cortex, hair keratin intermediate filaments are embedded in an interfilamentous matrix, consisting of hair keratin-associated proteins (KRTAP), which are essential for the formation of a rigid and resistant hair shaft through their extensive disulfide bond cross-linking with abundant cysteine residues of hair keratins. The matrix proteins include the high-sulfur and high-glycine-tyrosine keratins. In Macaca fascicularis (Crab-eating macaque), this protein is Keratin-associated protein 13-4 (KRTAP13-4).